Reading from the N-terminus, the 300-residue chain is GTPase Era (300 aa).

Residues 8 to 176 enclose the Era-type G domain; the sequence is RCGYVAIVGR…EALIAKHLPE (169 aa). The G1 stretch occupies residues 16 to 23; sequence GRPNVGKS. A GTP-binding site is contributed by 16–23; it reads GRPNVGKS. The interval 42-46 is G2; that stretch reads QTTRH. The segment at 63–66 is G3; the sequence is DTPG. GTP contacts are provided by residues 63-67 and 125-128; these read DTPGM and NKTD. Positions 125–128 are G4; that stretch reads NKTD. The interval 155–157 is G5; sequence ISA. A KH type-2 domain is found at 199 to 283; that stretch reads VREKIMRQLG…MLNLWVKVKG (85 aa).

It belongs to the TRAFAC class TrmE-Era-EngA-EngB-Septin-like GTPase superfamily. Era GTPase family. As to quaternary structure, monomer.

It is found in the cytoplasm. The protein localises to the cell inner membrane. Functionally, an essential GTPase that binds both GDP and GTP, with rapid nucleotide exchange. Plays a role in 16S rRNA processing and 30S ribosomal subunit biogenesis and possibly also in cell cycle regulation and energy metabolism. The chain is GTPase Era from Pseudomonas putida (strain W619).